Here is an 813-residue protein sequence, read N- to C-terminus: Protein SBE22 (813 aa).

Disordered stretches follow at residues M1–A66, E107–G240, and Q331–S359. Basic and acidic residues predominate over residues R56 to A66. Positions E107–S121 are enriched in low complexity. Residues S127–V138 are compositionally biased toward basic and acidic residues. Composition is skewed to polar residues over residues D139–S160, V169–M200, and K214–V234.

This sequence belongs to the SBE2 family.

It is found in the cytoplasm. The protein localises to the golgi apparatus. With SBE2, is involved in cell wall integrity and polarity processes like bud growth. The chain is Protein SBE22 (SBE22) from Candida glabrata (strain ATCC 2001 / BCRC 20586 / JCM 3761 / NBRC 0622 / NRRL Y-65 / CBS 138) (Yeast).